A 281-amino-acid polypeptide reads, in one-letter code: Pantothenate synthetase (281 aa).

Methionine 26–histidine 33 contacts ATP. Histidine 33 (proton donor) is an active-site residue. Glutamine 57 contacts (R)-pantoate. Glutamine 57 serves as a coordination point for beta-alanine. Glycine 143–aspartate 146 lines the ATP pocket. Glutamine 149 serves as a coordination point for (R)-pantoate. Residues valine 172 and leucine 180–arginine 183 each bind ATP.

This sequence belongs to the pantothenate synthetase family. Homodimer.

It localises to the cytoplasm. It carries out the reaction (R)-pantoate + beta-alanine + ATP = (R)-pantothenate + AMP + diphosphate + H(+). Its pathway is cofactor biosynthesis; (R)-pantothenate biosynthesis; (R)-pantothenate from (R)-pantoate and beta-alanine: step 1/1. Catalyzes the condensation of pantoate with beta-alanine in an ATP-dependent reaction via a pantoyl-adenylate intermediate. This Chloroflexus aurantiacus (strain ATCC 29366 / DSM 635 / J-10-fl) protein is Pantothenate synthetase.